A 316-amino-acid chain; its full sequence is Secondary metabolism regulator laeA (316 aa).

Belongs to the methyltransferase superfamily. LaeA methyltransferase family. As to quaternary structure, component of the heterotrimeric velvet complex composed of laeA, ve1 and velB; Ve1 acting as a bridging protein between laeA and velB. Interacts directly with veA.

It localises to the nucleus. The protein localises to the cytoplasm. The enzyme catalyses L-methionyl-[protein] + S-adenosyl-L-methionine = S-methyl-L-methionyl-[protein] + S-adenosyl-L-homocysteine. Its function is as follows. Methyltransferase that performs automethylation. No other methyl-accepting substrate has been identified yet. Component of the velvet transcription factor complex that acts as a global regulator for secondary metabolite gene expression. Controls the expression of the mycotoxins trichothecenes and zearalenon gene clusters. Negatively controls perithecial induction, but positively controls virulence toward the host plant. This Gibberella zeae (strain ATCC MYA-4620 / CBS 123657 / FGSC 9075 / NRRL 31084 / PH-1) (Wheat head blight fungus) protein is Secondary metabolism regulator laeA.